Here is a 689-residue protein sequence, read N- to C-terminus: Glycine--tRNA ligase beta subunit (689 aa).

The protein belongs to the class-II aminoacyl-tRNA synthetase family. As to quaternary structure, tetramer of two alpha and two beta subunits.

It localises to the cytoplasm. It catalyses the reaction tRNA(Gly) + glycine + ATP = glycyl-tRNA(Gly) + AMP + diphosphate. This Acinetobacter baumannii (strain ATCC 17978 / DSM 105126 / CIP 53.77 / LMG 1025 / NCDC KC755 / 5377) protein is Glycine--tRNA ligase beta subunit.